A 518-amino-acid polypeptide reads, in one-letter code: Putative cytochrome P450 CYP13A7 (518 aa).

Cys464 provides a ligand contact to heme.

It belongs to the cytochrome P450 family. It depends on heme as a cofactor.

Cytochromes P450 are a group of heme-thiolate monooxygenases. They oxidize a variety of structurally unrelated compounds, including steroids, fatty acids, and xenobiotics. This chain is Putative cytochrome P450 CYP13A7 (cyp-13A7), found in Caenorhabditis elegans.